Here is a 249-residue protein sequence, read N- to C-terminus: Probable transcriptional regulatory protein Csal_1845 (249 aa).

The protein belongs to the TACO1 family.

It localises to the cytoplasm. This is Probable transcriptional regulatory protein Csal_1845 from Chromohalobacter salexigens (strain ATCC BAA-138 / DSM 3043 / CIP 106854 / NCIMB 13768 / 1H11).